The sequence spans 258 residues: Type III pantothenate kinase 1 (258 aa).

6–13 contacts ATP; the sequence is DMGNSHIH. Residue 107-110 coordinates substrate; it reads GADR. Asp-109 functions as the Proton acceptor in the catalytic mechanism. Asp-130 contacts K(+). Residue Thr-133 coordinates ATP. Thr-185 is a binding site for substrate.

The protein belongs to the type III pantothenate kinase family. In terms of assembly, homodimer. It depends on NH4(+) as a cofactor. K(+) serves as cofactor.

It localises to the cytoplasm. It carries out the reaction (R)-pantothenate + ATP = (R)-4'-phosphopantothenate + ADP + H(+). It participates in cofactor biosynthesis; coenzyme A biosynthesis; CoA from (R)-pantothenate: step 1/5. In terms of biological role, catalyzes the phosphorylation of pantothenate (Pan), the first step in CoA biosynthesis. The protein is Type III pantothenate kinase 1 of Francisella tularensis subsp. tularensis (strain FSC 198).